A 117-amino-acid polypeptide reads, in one-letter code: Large ribosomal subunit protein bL19 (117 aa).

The protein belongs to the bacterial ribosomal protein bL19 family.

This protein is located at the 30S-50S ribosomal subunit interface and may play a role in the structure and function of the aminoacyl-tRNA binding site. The chain is Large ribosomal subunit protein bL19 from Azobacteroides pseudotrichonymphae genomovar. CFP2.